A 436-amino-acid polypeptide reads, in one-letter code: C4-dicarboxylate transport protein 2 (436 aa).

9 helical membrane passes run 14-34, 45-65, 77-97, 142-162, 198-218, 223-243, 290-310, 331-351, and 353-373; these read VLVAIAIGIALGHWYPETAVA, LIKMAIAPIIFCTVVTGIAGM, MALLYFEVVSTVALIIGLVVV, VVGAFANGDILQVLFFSVLFG, PIGAFGAMAFTIGAYGVGSLV, LMLCFYITCILFVLIVLGGIA, VVGLVIPTGYSFNLDGTSIYL, ITLLLVLLIASKGAAGVTGSG, and IVLAATLSAVGHLPVAGLALI. The interval 414–436 is disordered; the sequence is ELAGEGNASSPASDIPVGGREAV.

This sequence belongs to the dicarboxylate/amino acid:cation symporter (DAACS) (TC 2.A.23) family.

It localises to the cell inner membrane. Functionally, responsible for the transport of dicarboxylates such as succinate, fumarate, and malate from the periplasm across the membrane. The polypeptide is C4-dicarboxylate transport protein 2 (Pseudomonas aeruginosa (strain UCBPP-PA14)).